Consider the following 335-residue polypeptide: Hsp90 co-chaperone Cdc37-like 1 (335 aa).

Residues 1-11 show a composition bias toward pro residues; the sequence is MEQPWPPPGPW. The segment at 1–42 is disordered; that stretch reads MEQPWPPPGPWSFPRTGGETEEESDLDVSPSSSHYSPVPDGG. Residues 2 to 170 form a self-association region; the sequence is EQPWPPPGPW…YEQKIRHFGM (169 aa). Low complexity predominate over residues 27–40; sequence DVSPSSSHYSPVPD. Phosphoserine is present on residues Ser32 and Ser88. Positions 84-120 form a coiled coil; it reads HNSESLDQEHAKAQTAVSELRQREEEWRQKEEALVQR. A self-association and interaction with Hsp90 region spans residues 147–276; sequence KTEEEDKSQS…SRVRLYAQSQ (130 aa). The tract at residues 266–335 is interaction with Hsp70; it reads KSRVRLYAQS…EDDDRMMDTV (70 aa). Positions 277–335 are required for interaction with STIP1; that stretch reads SLQPVTVQNHVPHSGVGCIGSLESLPQNPDSLQCCTPAPLCSVDSVVHKEDDDRMMDTV.

It belongs to the CDC37 family. Self-associates. Forms complexes with Hsp70 and Hsp90. Interacts with CDC37, FKBP4, PPID and STIP1.

The protein resides in the cytoplasm. Functionally, co-chaperone that binds to numerous proteins and promotes their interaction with Hsp70 and Hsp90. The polypeptide is Hsp90 co-chaperone Cdc37-like 1 (Cdc37l1) (Mus musculus (Mouse)).